The sequence spans 314 residues: Small ribosomal subunit biogenesis GTPase RsgA (314 aa).

Residues 1-21 are disordered; the sequence is MKRAPTKQPAKPAARGGERAQ. The CP-type G domain maps to 85-246; the sequence is SDQFKSKLFA…LIDSPGFQEF (162 aa). GTP is bound by residues 134–137 and 188–196; these read NKID and GQSGMGKST. The Zn(2+) site is built by Cys-270, Cys-275, His-277, and Cys-283.

It belongs to the TRAFAC class YlqF/YawG GTPase family. RsgA subfamily. As to quaternary structure, monomer. Associates with 30S ribosomal subunit, binds 16S rRNA. Zn(2+) is required as a cofactor.

The protein resides in the cytoplasm. In terms of biological role, one of several proteins that assist in the late maturation steps of the functional core of the 30S ribosomal subunit. Helps release RbfA from mature subunits. May play a role in the assembly of ribosomal proteins into the subunit. Circularly permuted GTPase that catalyzes slow GTP hydrolysis, GTPase activity is stimulated by the 30S ribosomal subunit. The polypeptide is Small ribosomal subunit biogenesis GTPase RsgA (Burkholderia pseudomallei (strain 1106a)).